A 311-amino-acid polypeptide reads, in one-letter code: Pyrimidine-specific ribonucleoside hydrolase RihA (311 aa).

His-240 is an active-site residue.

The protein belongs to the IUNH family. RihA subfamily.

Its function is as follows. Hydrolyzes cytidine or uridine to ribose and cytosine or uracil, respectively. The chain is Pyrimidine-specific ribonucleoside hydrolase RihA from Salmonella dublin (strain CT_02021853).